The following is a 152-amino-acid chain: Large ribosomal subunit protein uL30 (152 aa).

The protein belongs to the universal ribosomal protein uL30 family. As to quaternary structure, part of the 50S ribosomal subunit.

In Methanosphaera stadtmanae (strain ATCC 43021 / DSM 3091 / JCM 11832 / MCB-3), this protein is Large ribosomal subunit protein uL30.